The following is a 238-amino-acid chain: Ubiquinone biosynthesis O-methyltransferase (238 aa).

S-adenosyl-L-methionine is bound by residues R40, G59, D81, and M126.

This sequence belongs to the methyltransferase superfamily. UbiG/COQ3 family.

The enzyme catalyses a 3-demethylubiquinol + S-adenosyl-L-methionine = a ubiquinol + S-adenosyl-L-homocysteine + H(+). The catalysed reaction is a 3-(all-trans-polyprenyl)benzene-1,2-diol + S-adenosyl-L-methionine = a 2-methoxy-6-(all-trans-polyprenyl)phenol + S-adenosyl-L-homocysteine + H(+). It participates in cofactor biosynthesis; ubiquinone biosynthesis. In terms of biological role, O-methyltransferase that catalyzes the 2 O-methylation steps in the ubiquinone biosynthetic pathway. The chain is Ubiquinone biosynthesis O-methyltransferase from Neisseria meningitidis serogroup A / serotype 4A (strain DSM 15465 / Z2491).